Consider the following 1651-residue polypeptide: A.superbus venom factor 2 (1651 aa).

Positions 1 to 22 are cleaved as a signal peptide; it reads MEGMALYLVAALLIGFPGSSHG. N-linked (GlcNAc...) asparagine glycosylation is present at asparagine 189. Proline 519, aspartate 542, valine 543, and aspartate 545 together coordinate Mg(2+). 12 disulfides stabilise this stretch: cysteine 547–cysteine 808, cysteine 616–cysteine 651, cysteine 684–cysteine 711, cysteine 685–cysteine 718, cysteine 698–cysteine 719, cysteine 864–cysteine 1501, cysteine 1346–cysteine 1477, cysteine 1377–cysteine 1446, cysteine 1494–cysteine 1499, cysteine 1506–cysteine 1578, cysteine 1525–cysteine 1649, and cysteine 1625–cysteine 1634. The propeptide occupies 657 to 739; the sequence is RRRRSSVLLL…QRESELFLAR (83 aa). The segment at 661–739 is C3a-like domain; that stretch reads SSVLLLDSKA…QRESELFLAR (79 aa). The region spanning 684–719 is the Anaphylatoxin-like domain; that stretch reads CCEDGMHENPMGYTCEKRAKYTQEGDACKAAFLECC. Residues 743–754 are factor B binding site; sequence EDEFFEEDNIIS. Positions 992–1269 are excised as a propeptide; it reads HLIITPSGSG…VMVFQALAEY (278 aa). The segment at 992–1269 is C3d-like domain; the sequence is HLIITPSGSG…VMVFQALAEY (278 aa). A factor H binding site region spans residues 1197 to 1259; that stretch reads VLMAASTGRD…GGTYGQTQAT (63 aa). Asparagine 1282 and asparagine 1352 each carry an N-linked (GlcNAc...) asparagine glycan. The NTR domain occupies 1506 to 1649; it reads CSLLNQQKKI…LSNTLTIFGC (144 aa).

The protein belongs to the venom complement C3 homolog family. As to quaternary structure, heterotrimer of alpha, beta and gamma chains; disulfide-linked. Is active with factor B in the presence of factor D. First processed by the removal of 4 Arg residues by furin-type protease, forming two chains, alpha and gamma/beta precursor, linked by a disulfide bond. This mature AVF is composed of three chains: alpha, gamma and beta. In terms of tissue distribution, expressed by the venom gland.

The protein localises to the secreted. Its function is as follows. Complement-activating protein in snake venom. It is a structural and functional analog of complement component C3b, the activated form of C3. It binds factor B (CFB), which is subsequently cleaved by factor D (CFD) to form the bimolecular complex AVF/Bb. AVF/Bb is a C3 convertase that cleaves complement component C3, but not C5 (as do CVF/Bb). The polypeptide is A.superbus venom factor 2 (Austrelaps superbus (Lowland copperhead snake)).